The chain runs to 147 residues: Large ribosomal subunit protein uL11 (147 aa).

Belongs to the universal ribosomal protein uL11 family. As to quaternary structure, part of the ribosomal stalk of the 50S ribosomal subunit. Interacts with L10 and the large rRNA to form the base of the stalk. L10 forms an elongated spine to which L12 dimers bind in a sequential fashion forming a multimeric L10(L12)X complex. One or more lysine residues are methylated.

In terms of biological role, forms part of the ribosomal stalk which helps the ribosome interact with GTP-bound translation factors. The polypeptide is Large ribosomal subunit protein uL11 (Corynebacterium aurimucosum (strain ATCC 700975 / DSM 44827 / CIP 107346 / CN-1) (Corynebacterium nigricans)).